Here is a 364-residue protein sequence, read N- to C-terminus: SVP1-like protein 2 (364 aa).

WD repeat units lie at residues 173–213 (AHDS…KICE) and 218–257 (YQHT…NTIR).

This sequence belongs to the WD repeat PROPPIN family.

It is found in the vacuole membrane. Its subcellular location is the cytoplasmic vesicle membrane. It localises to the preautophagosomal structure membrane. In terms of biological role, involved in mitochondrial or peroxisomal functions and amino acid signaling pathways. The polypeptide is SVP1-like protein 2 (hsv2) (Schizosaccharomyces pombe (strain 972 / ATCC 24843) (Fission yeast)).